A 187-amino-acid chain; its full sequence is UPF0301 protein YPTS_3341 (187 aa).

The protein belongs to the UPF0301 (AlgH) family.

This chain is UPF0301 protein YPTS_3341, found in Yersinia pseudotuberculosis serotype IB (strain PB1/+).